Here is a 355-residue protein sequence, read N- to C-terminus: 3-dehydroquinate synthase (355 aa).

NAD(+) is bound by residues Gly105 to Asp109, Thr129 to Ser130, Lys142, Lys151, and Thr169 to Thr172. Zn(2+) is bound by residues Glu184, His246, and His263.

Belongs to the sugar phosphate cyclases superfamily. Dehydroquinate synthase family. It depends on NAD(+) as a cofactor. The cofactor is Co(2+). Requires Zn(2+) as cofactor.

The protein resides in the cytoplasm. The enzyme catalyses 7-phospho-2-dehydro-3-deoxy-D-arabino-heptonate = 3-dehydroquinate + phosphate. The protein operates within metabolic intermediate biosynthesis; chorismate biosynthesis; chorismate from D-erythrose 4-phosphate and phosphoenolpyruvate: step 2/7. Its function is as follows. Catalyzes the conversion of 3-deoxy-D-arabino-heptulosonate 7-phosphate (DAHP) to dehydroquinate (DHQ). The chain is 3-dehydroquinate synthase from Streptococcus agalactiae serotype III (strain NEM316).